Consider the following 480-residue polypeptide: Aspartyl/glutamyl-tRNA(Asn/Gln) amidotransferase subunit B (480 aa).

The protein belongs to the GatB/GatE family. GatB subfamily. As to quaternary structure, heterotrimer of A, B and C subunits.

The enzyme catalyses L-glutamyl-tRNA(Gln) + L-glutamine + ATP + H2O = L-glutaminyl-tRNA(Gln) + L-glutamate + ADP + phosphate + H(+). It carries out the reaction L-aspartyl-tRNA(Asn) + L-glutamine + ATP + H2O = L-asparaginyl-tRNA(Asn) + L-glutamate + ADP + phosphate + 2 H(+). Functionally, allows the formation of correctly charged Asn-tRNA(Asn) or Gln-tRNA(Gln) through the transamidation of misacylated Asp-tRNA(Asn) or Glu-tRNA(Gln) in organisms which lack either or both of asparaginyl-tRNA or glutaminyl-tRNA synthetases. The reaction takes place in the presence of glutamine and ATP through an activated phospho-Asp-tRNA(Asn) or phospho-Glu-tRNA(Gln). The polypeptide is Aspartyl/glutamyl-tRNA(Asn/Gln) amidotransferase subunit B (Streptococcus pneumoniae (strain CGSP14)).